The primary structure comprises 280 residues: Biotin carboxyl carrier protein of acetyl-CoA carboxylase 1, chloroplastic (280 aa).

The N-terminal 82 residues, 1 to 82, are a transit peptide targeting the chloroplast; it reads MASSSFSVTS…SNAAKVDGPS (82 aa). Residues 52–75 are compositionally biased toward polar residues; it reads PSRSSYPVVKAQSNKVSTGASSNA. Disordered stretches follow at residues 52–106 and 164–215; these read PSRS…ATEE and QPSY…GTFY. The span at 177-188 shows a compositional bias: low complexity; the sequence is PAAAAPAPSTPA. Positions 189–198 are enriched in pro residues; it reads SLPPPSPPTP. The region spanning 203–279 is the Biotinyl-binding domain; that stretch reads LPTVKSPMAG…SLDTPLFVVQ (77 aa). Position 245 is an N6-biotinyllysine (Lys245).

As to quaternary structure, acetyl-CoA carboxylase is a heterohexamer composed of biotin carboxyl carrier protein, biotin carboxylase and 2 subunits each of ACCase subunit alpha and ACCase plastid-coded subunit beta (accD). In terms of tissue distribution, present in developing tissues from roots, leaves, flowers, siliques and seeds (at protein level).

The protein resides in the plastid. It localises to the chloroplast. Its pathway is lipid metabolism; fatty acid biosynthesis. This protein is a component of the acetyl coenzyme A carboxylase complex; first, biotin carboxylase catalyzes the carboxylation of the carrier protein and then the transcarboxylase transfers the carboxyl group to form malonyl-CoA. In Arabidopsis thaliana (Mouse-ear cress), this protein is Biotin carboxyl carrier protein of acetyl-CoA carboxylase 1, chloroplastic (BCCP1).